Consider the following 722-residue polypeptide: Fatty acid oxidation complex subunit alpha (722 aa).

The enoyl-CoA hydratase/isomerase stretch occupies residues 1-189 (MIYQGKSLSA…AQGAIDAVVE (189 aa)). Aspartate 296 lines the substrate pocket. The segment at 311 to 722 (TKAVNKAAVL…SYFTTDVKLA (412 aa)) is 3-hydroxyacyl-CoA dehydrogenase. NAD(+) is bound by residues methionine 325, aspartate 344, 401-403 (VVE), lysine 408, and serine 430. Histidine 451 functions as the For 3-hydroxyacyl-CoA dehydrogenase activity in the catalytic mechanism. An NAD(+)-binding site is contributed by asparagine 454. Residues asparagine 501 and tyrosine 661 each contribute to the substrate site.

The protein in the N-terminal section; belongs to the enoyl-CoA hydratase/isomerase family. In the C-terminal section; belongs to the 3-hydroxyacyl-CoA dehydrogenase family. Heterotetramer of two alpha chains (FadB) and two beta chains (FadA).

The catalysed reaction is a (3S)-3-hydroxyacyl-CoA + NAD(+) = a 3-oxoacyl-CoA + NADH + H(+). It carries out the reaction a (3S)-3-hydroxyacyl-CoA = a (2E)-enoyl-CoA + H2O. It catalyses the reaction a 4-saturated-(3S)-3-hydroxyacyl-CoA = a (3E)-enoyl-CoA + H2O. The enzyme catalyses (3S)-3-hydroxybutanoyl-CoA = (3R)-3-hydroxybutanoyl-CoA. The catalysed reaction is a (3Z)-enoyl-CoA = a 4-saturated (2E)-enoyl-CoA. It carries out the reaction a (3E)-enoyl-CoA = a 4-saturated (2E)-enoyl-CoA. Its pathway is lipid metabolism; fatty acid beta-oxidation. Functionally, involved in the aerobic and anaerobic degradation of long-chain fatty acids via beta-oxidation cycle. Catalyzes the formation of 3-oxoacyl-CoA from enoyl-CoA via L-3-hydroxyacyl-CoA. It can also use D-3-hydroxyacyl-CoA and cis-3-enoyl-CoA as substrate. This is Fatty acid oxidation complex subunit alpha from Colwellia psychrerythraea (strain 34H / ATCC BAA-681) (Vibrio psychroerythus).